Consider the following 109-residue polypeptide: Flagellar hook-basal body complex protein FliE (109 aa).

Residues 1 to 38 form a disordered region; that stretch reads MQAIHNDKSLLSPFSELNTDNRTKREESGNAFKEQKGG. Positions 19–38 are enriched in basic and acidic residues; it reads TDNRTKREESGNAFKEQKGG.

Belongs to the FliE family.

The protein localises to the bacterial flagellum basal body. The protein is Flagellar hook-basal body complex protein FliE of Helicobacter pylori (strain G27).